Reading from the N-terminus, the 249-residue chain is 5'-nucleotidase SurE (249 aa).

A divalent metal cation contacts are provided by D8, D9, S39, and N91.

Belongs to the SurE nucleotidase family. The cofactor is a divalent metal cation.

It localises to the cytoplasm. It carries out the reaction a ribonucleoside 5'-phosphate + H2O = a ribonucleoside + phosphate. In terms of biological role, nucleotidase that shows phosphatase activity on nucleoside 5'-monophosphates. The polypeptide is 5'-nucleotidase SurE (Haemophilus influenzae (strain 86-028NP)).